We begin with the raw amino-acid sequence, 250 residues long: Kallikrein-14 (250 aa).

A signal peptide spans 1-18 (MFLLLIILQALAVAIAQS). Residues 19 to 23 (QGDHK) constitute a propeptide, activation peptide. The Peptidase S1 domain maps to 24-248 (IIGGYRCVRN…YHSWIQRTMQ (225 aa)). Residues Cys-51 and Cys-67 are joined by a disulfide bond. Residues His-66 and Asp-110 each act as charge relay system in the active site. 3 cysteine pairs are disulfide-bonded: Cys-142/Cys-209, Cys-174/Cys-188, and Cys-199/Cys-224. The active-site Charge relay system is Ser-203.

The protein belongs to the peptidase S1 family. Kallikrein subfamily. Proteolytic cleavage of the activation peptide produces the active enzyme.

Its subcellular location is the secreted. It is found in the extracellular space. Its activity is regulated as follows. Inhibited by SERPINA1, SERPINC1, SERPINE1, SERPINF2, aprotinin, soybean, trypsin inhibitor and leupeptin. Inhibited by serine protease inhibitor SPINK5. Has an autoproteolytic activity which may have a regulatory effect. Activated by citrate and inhibited by zinc and to a lower extent by manganese. In terms of biological role, serine-type endopeptidase with a dual trypsin-like and chymotrypsin-like substrate specificity. May activate/inactivate the proteinase-activated receptors F2R, F2RL1 and F2RL3 and other kallikreins including KLK1, KLK3, KLK5 and KLK11. May function in seminal clot liquefaction through direct cleavage of the semenogelin SEMG1 and SEMG2 and activation of KLK3. May function through desmoglein DSG1 cleavage in epidermal desquamation a process by which the most superficial corneocytes are shed from the skin surface. May be involved in several aspects of tumor progression including growth, invasion and angiogenesis. The chain is Kallikrein-14 (Klk14) from Mus musculus (Mouse).